We begin with the raw amino-acid sequence, 77 residues long: Small VCP/p97-interacting protein (77 aa).

Disordered regions lie at residues 1 to 20 (MGLCFPCPGESAPPTPDLEE) and 25 to 77 (LAEA…WTVS). G2 carries the N-myristoyl glycine lipid modification. Residues C4 and C7 are each lipidated (S-palmitoyl cysteine). The segment at 21-33 (KRAKLAEAAERRQ) is VCP/p97-interacting motif (VIM). The span at 25-37 (LAEAAERRQKEAA) shows a compositional bias: basic and acidic residues. The residue at position 46 (S46) is a Phosphoserine.

The protein belongs to the SVIP family. As to quaternary structure, interacts (via VIM motif) with VCP/p97. Forms a complex with VCP/p97 and DERL1.

The protein resides in the membrane. Its subcellular location is the smooth endoplasmic reticulum membrane. It localises to the golgi apparatus membrane. The protein localises to the cell membrane. It is found in the lysosome membrane. Its function is as follows. Negative regulator of the ER-associated degradation pathway (ERAD) of misfolded proteins. It competes with AMFR/gp78 for binding VCP/p97, and inhibits AMFR/gp78-VCP/p97 complex formation that is required for degradation of ERAD substrates. Involved in the regulation of adrenal cortisol and dehydroepiandrosterone (DHEA) biosynthesis. In Homo sapiens (Human), this protein is Small VCP/p97-interacting protein (SVIP).